The following is a 769-amino-acid chain: MATEGMILTNHDHQIRVGVLTVSDSCFRNLAEDRSGINLKDLVQDPSLLGGTISAYKIVPDEIEEIKETLIDWCDEKELNLILTTGGTGFAPRDVTPEATKEVIEREAPGMALAMLMGSLNVTPLGMLSRPVCGIRGKTLIINLPGSKKGSQECFQFILPALPHAIDLLRDAIVKVKEVHDELEDLPSPPPPLSPPPTTSPHKQTEDKGVQCEEEEEEKKDSGVASTEDSSSSHITAAALAAKIPDSIISRGVQVLPRDTASLSTTPSESPRAQATSRLSTASCPTPKQIRRPDESKGVASRVGSLKARLPSCSSTYSVSEVQSRCSSKENILRASHSAVDITKVARRHRMSPFPLTSMDKAFITVLEMTPVLGTEIINYRDGMGRVLAQDVYAKDNLPPFPASVKDGYAVRAADGPGDRFIIGESQAGEQPTQTVMPGQVMRVTTGAPIPCGADAVVQVEDTELIRESDDGTEELEVRILVQARPGQDIRPIGHDIKRGECVLAKGTHMGPSEIGLLATVGVTEVEVNKFPVVAVMSTGNELLNPEDDLLPGKIRDSNRSTLLATIQEHGYPTINLGIVGDNPDDLLNALNEGISRADVIITSGGVSMGEKDYLKQVLDIDLHAQIHFGRVFMKPGLPTTFATLDIDGVRKIIFALPGNPVSAVVTCNLFVVPALRKMQGILDPRPTIIKARLSCDVKLDPRPEYHRCILTWHHQEPLPWAQSTGNQMSSRLMSMRSANGLLMLPPKTEQYVELHKGEVVDVMVIGRL.

Residues 14–153 (QIRVGVLTVS…LPGSKKGSQE (140 aa)) form an MPT Mo-transferase region. The interval 140 to 349 (LIINLPGSKK…VDITKVARRH (210 aa)) is interaction with GABARAP. 2 disordered regions span residues 181-232 (DELE…DSSS) and 260-299 (TASL…SKGV). Positions 187 to 199 (PSPPPPLSPPPTT) are enriched in pro residues. S188 and S194 each carry phosphoserine. T198 is subject to Phosphothreonine. Phosphoserine is present on S200. C212 carries S-palmitoyl cysteine lipidation. Polar residues predominate over residues 261-286 (ASLSTTPSESPRAQATSRLSTASCPT). S262 carries the post-translational modification Phosphoserine. Phosphothreonine is present on residues T265 and T266. Residues S268 and S270 each carry the phosphoserine modification. Residue C284 is the site of S-palmitoyl cysteine attachment. The segment at 327–769 (SSKENILRAS…VVDVMVIGRL (443 aa)) is MPT adenylyltransferase. A Phosphoserine modification is found at S338.

In the N-terminal section; belongs to the MoaB/Mog family. It in the C-terminal section; belongs to the MoeA family. In terms of assembly, homotrimer, homodimer and homooligomer. Interacts with SRGAP2 (via SH3 domain). Interacts with GLRB. Interacts with GABARAP. Interacts with GABRA3. GABRA3 and GLRB occupy overlapping binding sites. Interacts with ARHGAP32; IQSEC3, INSYN1 and INSYN2A. It depends on Mg(2+) as a cofactor. Palmitoylated. Palmitoylation is stimulated by GABA type A receptors activity. Palmitoylation by ZDHHC12 regulates clustering at synapses.

The protein resides in the postsynaptic cell membrane. The protein localises to the cell membrane. Its subcellular location is the cytoplasm. It localises to the cytosol. It is found in the cytoskeleton. The protein resides in the cell projection. The protein localises to the dendrite. Its subcellular location is the postsynaptic density. The catalysed reaction is molybdopterin + ATP + H(+) = adenylyl-molybdopterin + diphosphate. It catalyses the reaction adenylyl-molybdopterin + molybdate = Mo-molybdopterin + AMP + H(+). Its pathway is cofactor biosynthesis; molybdopterin biosynthesis. Inhibited by copper and tungsten. Its function is as follows. Microtubule-associated protein involved in membrane protein-cytoskeleton interactions. It is thought to anchor the inhibitory glycine receptor (GLYR) to subsynaptic microtubules. Acts as a major instructive molecule at inhibitory synapses, where it also clusters GABA type A receptors. Also has a catalytic activity and catalyzes two steps in the biosynthesis of the molybdenum cofactor. In the first step, molybdopterin is adenylated. Subsequently, molybdate is inserted into adenylated molybdopterin and AMP is released. This Mus musculus (Mouse) protein is Gephyrin (Gphn).